Here is a 696-residue protein sequence, read N- to C-terminus: Rho-related BTB domain-containing protein 1 (696 aa).

Residues 1–210 are rho-like; it reads MDADMDYERP…DNAIRAALIS (210 aa). Residues 21 to 28, 84 to 88, and 140 to 143 contribute to the GTP site; these read GDNAVGKT, DTFGD, and CQLD. BTB domains lie at 266-427 and 485-552; these read ADVL…DEKE and SDVT…SPNL. Residues 327-348 are disordered; that stretch reads VDPEEEREEGPPRIPQADQWKS.

Belongs to the small GTPase superfamily. Rho family. In terms of tissue distribution, ubiquitous, with highest levels in skeletal muscle, placenta, testis, stomach, and kidney, followed by uterus and adrenal gland. Expressed in a variety of fetal tissues.

This chain is Rho-related BTB domain-containing protein 1 (RHOBTB1), found in Homo sapiens (Human).